We begin with the raw amino-acid sequence, 364 residues long: Protein trichome birefringence-like 40 (364 aa).

Residues 9 to 25 (LASLSLILFSSFPGLLA) traverse the membrane as a helical; Signal-anchor for type II membrane protein segment. A GDS motif motif is present at residues 118–120 (GDS). Residues 341-355 (DCSHWCLPGLPDTWN) carry the DCXHWCLPGXXDXWN motif motif.

This sequence belongs to the PC-esterase family. TBL subfamily.

It localises to the membrane. May act as a bridging protein that binds pectin and other cell wall polysaccharides. Probably involved in maintaining esterification of pectins. May be involved in the specific O-acetylation of cell wall polymers. This is Protein trichome birefringence-like 40 (TBL40) from Arabidopsis thaliana (Mouse-ear cress).